Reading from the N-terminus, the 72-residue chain is MSKEEVLEFSGVVIELLPNAMFRVKLENDHEIIAHTAGRMRKNRIRVLAGDKIMVEMTPYDLTKGRITYRYK.

Residues 1-72 (MSKEEVLEFS…TKGRITYRYK (72 aa)) enclose the S1-like domain.

Belongs to the IF-1 family. Component of the 30S ribosomal translation pre-initiation complex which assembles on the 30S ribosome in the order IF-2 and IF-3, IF-1 and N-formylmethionyl-tRNA(fMet); mRNA recruitment can occur at any time during PIC assembly.

It is found in the cytoplasm. In terms of biological role, one of the essential components for the initiation of protein synthesis. Stabilizes the binding of IF-2 and IF-3 on the 30S subunit to which N-formylmethionyl-tRNA(fMet) subsequently binds. Helps modulate mRNA selection, yielding the 30S pre-initiation complex (PIC). Upon addition of the 50S ribosomal subunit IF-1, IF-2 and IF-3 are released leaving the mature 70S translation initiation complex. The protein is Translation initiation factor IF-1 of Bartonella bacilliformis (strain ATCC 35685 / KC583 / Herrer 020/F12,63).